The chain runs to 217 residues: Grancalcin (217 aa).

EF-hand domains follow at residues 48 to 83 (SSAG…SGIN), 89 to 122 (FSLE…AALN), 119 to 154 (AALN…MGYR), and 155 to 180 (LSPQ…DYVA). Asp-65, Asp-69, and Glu-71 together coordinate Ca(2+). Residues Asp-132, Asp-134, Ser-136, Thr-138, and Glu-143 each contribute to the Ca(2+) site.

Homodimer. Interacts with SRI and LCP1. As to expression, detected in neutrophils and macrophages (at protein level). Highly expressed in bone marrow.

It is found in the cytoplasm. Its subcellular location is the cytoplasmic granule membrane. Its function is as follows. Calcium-binding protein that may play a role in the adhesion of neutrophils to fibronectin. May play a role in the formation of focal adhesions. The protein is Grancalcin (GCA) of Homo sapiens (Human).